The primary structure comprises 327 residues: uncharacterized protein (327 aa).

Positions 12–84 (MRIDRYLTQQ…IPITILYEDD (73 aa)) constitute an S4 RNA-binding domain. The active site involves Asp137.

The protein belongs to the pseudouridine synthase RluA family.

It carries out the reaction a uridine in RNA = a pseudouridine in RNA. This is an uncharacterized protein from Chlorobaculum parvum (strain DSM 263 / NCIMB 8327) (Chlorobium vibrioforme subsp. thiosulfatophilum).